The sequence spans 279 residues: Tryptophan synthase alpha chain (279 aa).

Catalysis depends on proton acceptor residues Glu-50 and Asp-61.

The protein belongs to the TrpA family. Tetramer of two alpha and two beta chains.

The enzyme catalyses (1S,2R)-1-C-(indol-3-yl)glycerol 3-phosphate + L-serine = D-glyceraldehyde 3-phosphate + L-tryptophan + H2O. It functions in the pathway amino-acid biosynthesis; L-tryptophan biosynthesis; L-tryptophan from chorismate: step 5/5. Its function is as follows. The alpha subunit is responsible for the aldol cleavage of indoleglycerol phosphate to indole and glyceraldehyde 3-phosphate. This chain is Tryptophan synthase alpha chain, found in Brucella melitensis biotype 2 (strain ATCC 23457).